We begin with the raw amino-acid sequence, 632 residues long: MHGLLLAAGLISLPLHVLAHPQPSSTSLAGRAVDLNEYRIGHRSSYTSNDEMMKQPSIASFRAGTYVEVATEMVKQTMPNMEFRLVDDHYIGQSGIGHVRFRQTMHGIDIDNSDFNVNIGQDGKVLSHGNSFYTGPAPESSPVQKRDFSDPMQALHGVRKALNLPIKAEGATVENMSEHKVMFKGTSGALSDPTAKLCYMAKEDGSLALTWRVETDIGDNWLLSYMDAKDTGKVHNVVDYVAHATFQVYKWGLADPTEGNREILTNPWNLQTSPLTWLADGQNNFTATRGNNAIAQYNPDGGNDYENNYRPSPKNLKFEYPYSANMDPPKTYIDASVTQLFYTSNVCHDLYYMLGFNEKAGNFQVNNRGQGGKGNDYVILNAQDGSGTNNANFATPPDGQPGRMRAYIWTRANPPRDASFEAGTIIHEYTHGLSNRLCGGPANSRCLNAIESGGMGEGWGDFYATAVRLKPKDTRKTNYVKGGWVNNSPKGVRMYPYSTDMSVNPLVYTSNNQLNEVHAIGTVWATMLYELLWNLIDKHGKNDGPVPIFKNGIPSDGKYLAMKIVMDGMAIQPCNPNFVQARDAILDADKNLTKASNKCEIWKAFAKRGLGVGAKFDPKNRIGSNEVPKECK.

The signal sequence occupies residues Met-1–Ala-19. A propeptide spanning residues His-20–Phe-246 is cleaved from the precursor. A glycan (N-linked (GlcNAc...) asparagine) is linked at Asn-284. Residue Thr-430 coordinates Zn(2+). Residue His-431 is part of the active site. Ser-434 contributes to the Zn(2+) binding site. A glycan (N-linked (GlcNAc...) asparagine) is linked at Asn-591.

This sequence belongs to the peptidase M36 family. Zn(2+) is required as a cofactor.

The protein resides in the secreted. Its activity is regulated as follows. PMSF, soybean trypsin inhibitor (SBTI) and chymostatin strongly inhibit the proteinase. In terms of biological role, secreted metalloproteinase probably acting as a virulence factor. The chain is Extracellular metalloproteinase 1 (MEP1) from Arthroderma otae (Microsporum canis).